The following is a 324-amino-acid chain: Quinolinate synthase 1 (324 aa).

Iminosuccinate contacts are provided by H48 and S66. Position 111 (C111) interacts with [4Fe-4S] cluster. Iminosuccinate is bound by residues 137–139 (YVN) and S154. C196 lines the [4Fe-4S] cluster pocket. Iminosuccinate contacts are provided by residues 222 to 224 (HPE) and T239. C282 provides a ligand contact to [4Fe-4S] cluster.

The protein belongs to the quinolinate synthase family. Type 2 subfamily. [4Fe-4S] cluster serves as cofactor.

It is found in the cytoplasm. It carries out the reaction iminosuccinate + dihydroxyacetone phosphate = quinolinate + phosphate + 2 H2O + H(+). It participates in cofactor biosynthesis; NAD(+) biosynthesis; quinolinate from iminoaspartate: step 1/1. In terms of biological role, catalyzes the condensation of iminoaspartate with dihydroxyacetone phosphate to form quinolinate. In Mesorhizobium japonicum (strain LMG 29417 / CECT 9101 / MAFF 303099) (Mesorhizobium loti (strain MAFF 303099)), this protein is Quinolinate synthase 1.